The primary structure comprises 359 residues: Putative cyclin-F1-2 (359 aa).

Belongs to the cyclin family. Cyclin F subfamily.

In Oryza sativa subsp. japonica (Rice), this protein is Putative cyclin-F1-2 (CYCF1-2).